The following is a 500-amino-acid chain: Glycerol kinase (500 aa).

Threonine 16 contacts ADP. Threonine 16 and threonine 17 together coordinate ATP. Residue threonine 16 coordinates sn-glycerol 3-phosphate. Position 20 (arginine 20) interacts with ADP. Sn-glycerol 3-phosphate-binding residues include arginine 86, glutamate 87, tyrosine 138, and aspartate 243. Positions 86, 87, 138, 243, and 244 each coordinate glycerol. 2 residues coordinate ADP: threonine 265 and glycine 313. Residues threonine 265, glycine 313, glutamine 317, and glycine 414 each contribute to the ATP site. Positions 414 and 418 each coordinate ADP.

Belongs to the FGGY kinase family.

The catalysed reaction is glycerol + ATP = sn-glycerol 3-phosphate + ADP + H(+). Its pathway is polyol metabolism; glycerol degradation via glycerol kinase pathway; sn-glycerol 3-phosphate from glycerol: step 1/1. Inhibited by fructose 1,6-bisphosphate (FBP). In terms of biological role, key enzyme in the regulation of glycerol uptake and metabolism. Catalyzes the phosphorylation of glycerol to yield sn-glycerol 3-phosphate. The chain is Glycerol kinase from Trichormus variabilis (strain ATCC 29413 / PCC 7937) (Anabaena variabilis).